The following is a 426-amino-acid chain: Adenylosuccinate synthetase (426 aa).

GTP is bound by residues 12-18 and 40-42; these read GDEGKGK and GHT. The active-site Proton acceptor is the Asp-13. Mg(2+) contacts are provided by Asp-13 and Gly-40. Residues 13 to 16, 38 to 41, Thr-131, Arg-145, Gln-226, Thr-241, and Arg-305 each bind IMP; these read DEGK and NAGH. His-41 serves as the catalytic Proton donor. 301–307 serves as a coordination point for substrate; it reads ATTGRKR. GTP-binding positions include Arg-307, 333–335, and 415–417; these read KLD and SVG.

Belongs to the adenylosuccinate synthetase family. In terms of assembly, homodimer. Requires Mg(2+) as cofactor.

Its subcellular location is the cytoplasm. The enzyme catalyses IMP + L-aspartate + GTP = N(6)-(1,2-dicarboxyethyl)-AMP + GDP + phosphate + 2 H(+). It participates in purine metabolism; AMP biosynthesis via de novo pathway; AMP from IMP: step 1/2. Functionally, plays an important role in the de novo pathway of purine nucleotide biosynthesis. Catalyzes the first committed step in the biosynthesis of AMP from IMP. The chain is Adenylosuccinate synthetase from Nitratidesulfovibrio vulgaris (strain ATCC 29579 / DSM 644 / CCUG 34227 / NCIMB 8303 / VKM B-1760 / Hildenborough) (Desulfovibrio vulgaris).